A 202-amino-acid polypeptide reads, in one-letter code: MQAEDLKLILASTSPRRRELLGRFGLPFEVLGVEVEEVPRCGEAAEDYVRRVASDKSARGQSMAPSDAAVLAADTEVVLDGQIFGKPQGAEHAREMLGRLSGRTHEVLSAVSLRRGDCHWQALSVSRVRFRDLGLEEIDAYWASGEPADKAGAYAIQGRGELFVAELQGSFSGVMGLPLLETARLLRHLGLGTARLLAGAAP.

Asp74 functions as the Proton acceptor in the catalytic mechanism.

It belongs to the Maf family. YhdE subfamily. The cofactor is a divalent metal cation.

Its subcellular location is the cytoplasm. The enzyme catalyses dTTP + H2O = dTMP + diphosphate + H(+). It carries out the reaction UTP + H2O = UMP + diphosphate + H(+). Functionally, nucleoside triphosphate pyrophosphatase that hydrolyzes dTTP and UTP. May have a dual role in cell division arrest and in preventing the incorporation of modified nucleotides into cellular nucleic acids. This chain is dTTP/UTP pyrophosphatase, found in Methylococcus capsulatus (strain ATCC 33009 / NCIMB 11132 / Bath).